The chain runs to 100 residues: Large ribosomal subunit protein uL23 (100 aa).

The protein belongs to the universal ribosomal protein uL23 family. As to quaternary structure, part of the 50S ribosomal subunit. Contacts protein L29, and trigger factor when it is bound to the ribosome.

In terms of biological role, one of the early assembly proteins it binds 23S rRNA. One of the proteins that surrounds the polypeptide exit tunnel on the outside of the ribosome. Forms the main docking site for trigger factor binding to the ribosome. This chain is Large ribosomal subunit protein uL23, found in Shewanella sp. (strain MR-4).